The primary structure comprises 672 residues: Nuclear hormone receptor family member nhr-5 (672 aa).

Residues methionine 1–valine 19 are compositionally biased toward low complexity. The disordered stretch occupies residues methionine 1–serine 38. The nuclear receptor DNA-binding region spans threonine 40–proline 115. 2 consecutive NR C4-type zinc fingers follow at residues cysteine 43–cysteine 63 and cysteine 79–cysteine 98. The 270-residue stretch at glutamate 155–phenylalanine 424 folds into the NR LBD domain. Positions asparagine 550 to serine 577 are disordered. Over residues serine 562 to serine 577 the composition is skewed to low complexity.

It belongs to the nuclear hormone receptor family.

It is found in the nucleus. In terms of biological role, orphan nuclear receptor. The protein is Nuclear hormone receptor family member nhr-5 (nhr-5) of Caenorhabditis elegans.